We begin with the raw amino-acid sequence, 542 residues long: MPIYDLIIKNGIICTASDIYAAEIAVNNGKVQLIAASIDPSLGSEVIDAEGAFITPGGIDAHVHVDEPLKLLGDVVDTMEHATRSAVAGGTTTVVAFSTQDVSKKGPSALAESVKLDVDEYSEQTLYCDYGLHLILFQIEKPSVEARELLDVQLQAAYNDYGVSSVKMFMTYPGLQISDYDIMSAMYATRKNGFTTMLHAENGDMVKWMIEALEEQGLTDAYYHGVSRPSIVEGEATNRAITLATTMDTPILFVHVSSPQAAEVIKQAQTKGLKVYAETCPQYALLSDAITRCHHHGEVESYGVGIDLSSISESPFTNPDDRFIGSKYICSPPIRPEGTQKSIWKGMNNGTFTIVGSDHCSYNYYEKTSTASKHRAFDPENNKNGEFRYIPNGLPGVCTRMPLLYDYGYLRGNLTSMMKLVEIQCTNPAKVYGMYPQKGSILPGVSDADLVIWYPDDSKKEYNSKPKLITNKLMEHNCDYTPFEGIEIKNWPRYTIVKGKIVYKEGEILKENADGKYLKRGKSFMCTPKNEWVTEWRPKYES.

Positions 62, 64, and 167 each coordinate Zn(2+). Lysine 167 is modified (N6-carboxylysine). Tyrosine 172 lines the substrate pocket. Zn(2+) is bound by residues histidine 199 and histidine 255. Serine 331 serves as a coordination point for substrate. Residue aspartate 358 coordinates Zn(2+). Substrate is bound at residue asparagine 392.

Belongs to the metallo-dependent hydrolases superfamily. Hydantoinase/dihydropyrimidinase family. As to quaternary structure, homotetramer. Requires Zn(2+) as cofactor. Carboxylation allows a single lysine to coordinate two zinc ions.

The enzyme catalyses 5,6-dihydrouracil + H2O = 3-(carbamoylamino)propanoate + H(+). In terms of biological role, catalyzes the second step of the reductive pyrimidine degradation, the reversible hydrolytic ring opening of dihydropyrimidines. Can catalyze the ring opening of 5,6-dihydrouracil to N-carbamyl-alanine and of 5,6-dihydrothymine to N-carbamyl-amino isobutyrate. The polypeptide is Dihydropyrimidinase (PYD2) (Lachancea kluyveri (strain ATCC 58438 / CBS 3082 / BCRC 21498 / NBRC 1685 / JCM 7257 / NCYC 543 / NRRL Y-12651) (Yeast)).